The sequence spans 574 residues: Proline--tRNA ligase (574 aa).

This sequence belongs to the class-II aminoacyl-tRNA synthetase family. ProS type 1 subfamily. As to quaternary structure, homodimer.

The protein resides in the cytoplasm. It catalyses the reaction tRNA(Pro) + L-proline + ATP = L-prolyl-tRNA(Pro) + AMP + diphosphate. Catalyzes the attachment of proline to tRNA(Pro) in a two-step reaction: proline is first activated by ATP to form Pro-AMP and then transferred to the acceptor end of tRNA(Pro). As ProRS can inadvertently accommodate and process non-cognate amino acids such as alanine and cysteine, to avoid such errors it has two additional distinct editing activities against alanine. One activity is designated as 'pretransfer' editing and involves the tRNA(Pro)-independent hydrolysis of activated Ala-AMP. The other activity is designated 'posttransfer' editing and involves deacylation of mischarged Ala-tRNA(Pro). The misacylated Cys-tRNA(Pro) is not edited by ProRS. This Aeromonas hydrophila subsp. hydrophila (strain ATCC 7966 / DSM 30187 / BCRC 13018 / CCUG 14551 / JCM 1027 / KCTC 2358 / NCIMB 9240 / NCTC 8049) protein is Proline--tRNA ligase.